A 331-amino-acid chain; its full sequence is Glyceraldehyde-3-phosphate dehydrogenase (331 aa).

Residues 12-13 (RI), Asp-34, Arg-78, and Thr-120 contribute to the NAD(+) site. D-glyceraldehyde 3-phosphate-binding positions include 149 to 151 (SCT), Thr-180, 209 to 210 (TG), and Arg-232. The Nucleophile role is filled by Cys-150. Asn-314 contributes to the NAD(+) binding site.

It belongs to the glyceraldehyde-3-phosphate dehydrogenase family. In terms of assembly, homotetramer.

The protein resides in the cytoplasm. It catalyses the reaction D-glyceraldehyde 3-phosphate + phosphate + NAD(+) = (2R)-3-phospho-glyceroyl phosphate + NADH + H(+). It functions in the pathway carbohydrate degradation; glycolysis; pyruvate from D-glyceraldehyde 3-phosphate: step 1/5. In terms of biological role, catalyzes the oxidative phosphorylation of glyceraldehyde 3-phosphate (G3P) to 1,3-bisphosphoglycerate (BPG) using the cofactor NAD. The first reaction step involves the formation of a hemiacetal intermediate between G3P and a cysteine residue, and this hemiacetal intermediate is then oxidized to a thioester, with concomitant reduction of NAD to NADH. The reduced NADH is then exchanged with the second NAD, and the thioester is attacked by a nucleophilic inorganic phosphate to produce BPG. The chain is Glyceraldehyde-3-phosphate dehydrogenase (gapA) from Shimwellia blattae (strain ATCC 29907 / DSM 4481 / JCM 1650 / NBRC 105725 / CDC 9005-74) (Escherichia blattae).